Here is a 446-residue protein sequence, read N- to C-terminus: tRNA-2-methylthio-N(6)-dimethylallyladenosine synthase (446 aa).

The 117-residue stretch at 5-121 folds into the MTTase N-terminal domain; sequence RRFYIQTFGC…LPSLIDDAAS (117 aa). [4Fe-4S] cluster contacts are provided by cysteine 14, cysteine 50, cysteine 84, cysteine 157, cysteine 161, and cysteine 164. Residues 143–373 enclose the Radical SAM core domain; sequence REGRISAFIP…IDLQQEISAE (231 aa). Residues 376–439 form the TRAM domain; that stretch reads RRQVGTVAEV…SATLSGSREG (64 aa).

It belongs to the methylthiotransferase family. MiaB subfamily. Monomer. The cofactor is [4Fe-4S] cluster.

It is found in the cytoplasm. The enzyme catalyses N(6)-dimethylallyladenosine(37) in tRNA + (sulfur carrier)-SH + AH2 + 2 S-adenosyl-L-methionine = 2-methylsulfanyl-N(6)-dimethylallyladenosine(37) in tRNA + (sulfur carrier)-H + 5'-deoxyadenosine + L-methionine + A + S-adenosyl-L-homocysteine + 2 H(+). Catalyzes the methylthiolation of N6-(dimethylallyl)adenosine (i(6)A), leading to the formation of 2-methylthio-N6-(dimethylallyl)adenosine (ms(2)i(6)A) at position 37 in tRNAs that read codons beginning with uridine. The sequence is that of tRNA-2-methylthio-N(6)-dimethylallyladenosine synthase from Chlorobium luteolum (strain DSM 273 / BCRC 81028 / 2530) (Pelodictyon luteolum).